Consider the following 260-residue polypeptide: MALRRPMVAGNWKMNGSAQLAQELFKKFATKLQNDSAEVVLCPPTIYLESVRQQLDANKEALNGCLVRMGAQNLSQHDFGAYTGEVSGQMLKDSGCRYVIIGHSERRRMYGETSDIVAEKFAAAQKHGLTPILCVGESGPAREARRTFEVIAEELDVVIEKNGTMAFDNAIIAYEPLWAVGTGKSATPEQAQEVHAFIRKRLSEVSPFIGENIRILYGGSVTPSNAADLFAQPDVDGGLIGGVSLNSTEFLSLCSIAMSA.

Residue 11-13 (NWK) coordinates substrate. Catalysis depends on His-103, which acts as the Electrophile. The active-site Proton acceptor is the Glu-175. Residues Gly-181, Ser-220, and 241–242 (GG) each bind substrate.

The protein belongs to the triosephosphate isomerase family. Homodimer.

The protein resides in the cytoplasm. It carries out the reaction D-glyceraldehyde 3-phosphate = dihydroxyacetone phosphate. The protein operates within carbohydrate biosynthesis; gluconeogenesis. It participates in carbohydrate degradation; glycolysis; D-glyceraldehyde 3-phosphate from glycerone phosphate: step 1/1. Involved in the gluconeogenesis. Catalyzes stereospecifically the conversion of dihydroxyacetone phosphate (DHAP) to D-glyceraldehyde-3-phosphate (G3P). This chain is Triosephosphate isomerase, found in Shewanella woodyi (strain ATCC 51908 / MS32).